We begin with the raw amino-acid sequence, 727 residues long: Translation initiation factor IF-2, mitochondrial (727 aa).

The N-terminal 29 residues, 1-29 (MNQKLLKLENLLRFHTIYRQLHSLCQRRA), are a transit peptide targeting the mitochondrion. Residues 178-348 (PRSPVVTIMG…VALAEMLELK (171 aa)) enclose the tr-type G domain. The tract at residues 187 to 194 (GHVDHGKT) is G1. A GTP-binding site is contributed by 187-194 (GHVDHGKT). The tract at residues 212-216 (GITQH) is G2. GTP contacts are provided by residues 234 to 237 (DTPG) and 288 to 291 (NKCD). The segment at 234–237 (DTPG) is G3. The segment at 288-291 (NKCD) is G4. Residues 324–326 (SAL) are G5. Residue Thr-688 is modified to Phosphothreonine.

The protein belongs to the TRAFAC class translation factor GTPase superfamily. Classic translation factor GTPase family. IF-2 subfamily. In terms of assembly, monomer. Expressed in all tissues examined. Highest level in skeletal muscle.

It is found in the mitochondrion. One of the essential components for the initiation of protein synthesis. Protects formylmethionyl-tRNA from spontaneous hydrolysis and promotes its binding to the 30S ribosomal subunits. Also involved in the hydrolysis of GTP during the formation of the 70S ribosomal complex. The protein is Translation initiation factor IF-2, mitochondrial (MTIF2) of Homo sapiens (Human).